The sequence spans 525 residues: GMP synthase [glutamine-hydrolyzing] (525 aa).

A Glutamine amidotransferase type-1 domain is found at 11-200; it reads PVLVVDFGAQ…LTEIAGLEQN (190 aa). The Nucleophile role is filled by cysteine 88. Active-site residues include histidine 174 and glutamate 176. Residues 201-399 form the GMPS ATP-PPase domain; it reads WTAANIAEEL…LGLPEEIVNR (199 aa). 229–235 contributes to the ATP binding site; that stretch reads SGGVDSA.

Homodimer.

The catalysed reaction is XMP + L-glutamine + ATP + H2O = GMP + L-glutamate + AMP + diphosphate + 2 H(+). It participates in purine metabolism; GMP biosynthesis; GMP from XMP (L-Gln route): step 1/1. Its function is as follows. Catalyzes the synthesis of GMP from XMP. The polypeptide is GMP synthase [glutamine-hydrolyzing] (Corynebacterium diphtheriae (strain ATCC 700971 / NCTC 13129 / Biotype gravis)).